Consider the following 450-residue polypeptide: MRECISIHVGQAGVQIGNACWELYCLEHGIQPDGQMPSDKTVGGGDDSFNTFFSETGAGKHVPRAVFVDLEPTVVDEVRTGTYRQLFHPEQLITGKEDAANNYARGHYTIGKEIVDLVLDRIRKLADQCTGLQGFLIFHSFGGGTGSGFTSLLMERLSVDYGKKSKLEFAVYPAPQVSTAVVEPYNSILTTHTTLEHSDCAFMVDNEAIYDICRRNLDIERPTYTNLNRLIGQIVSSITASLRFDGALNVDLTEFQTNLVPYPRIHFPLVTYAPVISAEKAYHEQLSVAEITNACFEPANQMVKVDPRHGKYMACCMLYRGDVVPKDVNAAIATIKTKRTIQFVDWCPTGFKVGINYQPPTVVPGGDLAKVQRAVCMLSNTTAIAEAWARLDHKFDLMYAKRAFVHWYVGEGMEEGEFSEAREDLAALEKDYEEVGMDSGDGEGEGAEEY.

Position 11 (Gln11) interacts with GTP. Position 40 is an N6-acetyllysine (Lys40). GTP is bound by residues Glu71, Ser140, Gly144, Thr145, Thr179, Asn206, and Asn228. Residue Glu71 coordinates Mg(2+). Glu254 is an active-site residue.

This sequence belongs to the tubulin family. In terms of assembly, dimer of alpha and beta chains. A typical microtubule is a hollow water-filled tube with an outer diameter of 25 nm and an inner diameter of 15 nM. Alpha-beta heterodimers associate head-to-tail to form protofilaments running lengthwise along the microtubule wall with the beta-tubulin subunit facing the microtubule plus end conferring a structural polarity. Microtubules usually have 13 protofilaments but different protofilament numbers can be found in some organisms and specialized cells. The cofactor is Mg(2+). In terms of processing, undergoes a tyrosination/detyrosination cycle, the cyclic removal and re-addition of a C-terminal tyrosine residue by the enzymes tubulin tyrosine carboxypeptidase (TTCP) and tubulin tyrosine ligase (TTL), respectively. Acetylation of alpha chains at Lys-40 stabilizes microtubules and affects affinity and processivity of microtubule motors. This modification has a role in multiple cellular functions, ranging from cell motility, cell cycle progression or cell differentiation to intracellular trafficking and signaling. During the early stages of oogenesis lky/Alpha-tubulin N-acetyltransferase 2 is the main acetyltransferase responsible for Lys-40 acetylation in germline cells while Atat/alpha-tubulin N-acetyltransferase 1 is the main acetyltransferase responsible for Lys-40 acetylation in somatic cells.

Its subcellular location is the cytoplasm. It localises to the cytoskeleton. It catalyses the reaction GTP + H2O = GDP + phosphate + H(+). Tubulin is the major constituent of microtubules, a cylinder consisting of laterally associated linear protofilaments composed of alpha- and beta-tubulin heterodimers. Microtubules grow by the addition of GTP-tubulin dimers to the microtubule end, where a stabilizing cap forms. Below the cap, tubulin dimers are in GDP-bound state, owing to GTPase activity of alpha-tubulin. The chain is Tubulin alpha-3 chain (alphaTub84D) from Drosophila melanogaster (Fruit fly).